Reading from the N-terminus, the 806-residue chain is WEB family protein At3g02930, chloroplastic (806 aa).

A chloroplast-targeting transit peptide spans 1-78 (MASKIKNGLS…PTPPEKTQIR (78 aa)). Disordered regions lie at residues 1-94 (MASK…QIKE) and 380-403 (KSEQ…EKLK). Over residues 9–22 (LSDTTLRKSSSTSL) the composition is skewed to low complexity. A compositionally biased stretch (polar residues) spans 34 to 59 (PDSNSPSPTQQQSRLSFERPSSNSKP). 3 coiled-coil regions span residues 88–530 (QSVQ…FESA), 585–662 (DCLK…IEEN), and 698–757 (ETLD…EDLN). Over residues 391-403 (ESSKSEKEAEKLK) the composition is skewed to basic and acidic residues. 2 disordered regions span residues 684 to 725 (ENGY…EDET) and 746 to 777 (KESA…EDEL). 2 stretches are compositionally biased toward basic and acidic residues: residues 685–699 (NGYR…KVET) and 706–725 (KLEE…EDET). The segment covering 759–769 (VDQSQKTSPVN) has biased composition (polar residues).

The protein belongs to the WEB family.

The protein resides in the plastid. Its subcellular location is the chloroplast. In Arabidopsis thaliana (Mouse-ear cress), this protein is WEB family protein At3g02930, chloroplastic.